We begin with the raw amino-acid sequence, 232 residues long: Homeobox protein Rhox13 (232 aa).

The interval 45 to 114 (QAAVASSHDS…EAAAPSVAAV (70 aa)) is disordered. Residues 68-105 (SDSESESDSESESDSSDSSDESDDDSSTSDEDTSDPEE) are compositionally biased toward acidic residues. Positions 148 to 207 (RRGPPFHFAQWQVEEMESLFEETQYPDLLTRGELARTLNVPEVKVKVWFTNRRAKQRKIE) form a DNA-binding region, homeobox.

It belongs to the paired-like homeobox family.

The protein resides in the nucleus. In terms of biological role, probable transcription factor. This is Homeobox protein Rhox13 from Mus musculus (Mouse).